The sequence spans 221 residues: Queuosine precursor transporter (221 aa).

The Cytoplasmic segment spans residues 1 to 12 (MNVFSQTQRYKA). Residues 13-33 (LFWLSLFHLLVITSSNYLVQL) traverse the membrane as a helical segment. Position 34 (Pro34) is a topological domain, periplasmic. Residues 35-55 (VSILGFHTTWGAFSFPFIFLA) traverse the membrane as a helical segment. At 56–70 (TDLTVRIFGAPLARR) the chain is on the cytoplasmic side. The chain crosses the membrane as a helical span at residues 71–91 (IIFAVMIPALLISYVISSLFY). Residues 92–97 (MGSWQG) are Periplasmic-facing. The helical transmembrane segment at 98–118 (FGALAHFNLFVARIATASFMA) threads the bilayer. Topologically, residues 119–143 (YALGQILDVHVFNRLRQSRRWWLAP) are cytoplasmic. Residues 144-164 (TASTLFGNVSDTLAFFFIAFW) traverse the membrane as a helical segment. Topologically, residues 165-184 (RSPDAFMAEHWMEIALVDYC) are periplasmic. A helical membrane pass occupies residues 185 to 205 (FKVLISIVFFLPMYGVLLNML). The Cytoplasmic portion of the chain corresponds to 206-221 (LKRLADKSEINALQAS).

Belongs to the vitamin uptake transporter (VUT/ECF) (TC 2.A.88) family. Q precursor transporter subfamily.

The protein localises to the cell inner membrane. Its function is as follows. Involved in the import of queuosine (Q) precursors, required for Q precursor salvage. Transports 7-cyano-7-deazaguanine (preQ(0)) and 7-aminomethyl-7-deazaguanine (preQ(1)), with a preference for preQ(0). In Escherichia coli (strain K12), this protein is Queuosine precursor transporter (yhhQ).